We begin with the raw amino-acid sequence, 229 residues long: Non-structural protein P8 (229 aa).

A run of 2 helical transmembrane segments spans residues 119–139 (IIHM…VCTL) and 162–182 (SLNP…MVCA).

Belongs to the orbivirus NS3 family. Forms homooligomers via coiled-coil motif. Interacts with host OPTN; this interaction inhibits innate immune response.

The protein resides in the host cell membrane. Its subcellular location is the host Golgi apparatus. Functionally, plays a role in the inhibition of host innate immune response. Interacts with host OPTN and thus inhibits the recruitment of TBK1 to the host Golgi apparatus. In turn, downstream partner IRF3 cannot be activated and IFN-beta production is impaired. Facilitates viral particle release either by increasing plasma membrane permeability through a viroporin-like activity or by viral budding. This is Non-structural protein P8 (Segment-10) from Bluetongue virus 17 (isolate USA) (BTV 17).